Reading from the N-terminus, the 533-residue chain is Acyl-CoA-binding domain-containing protein 5 (533 aa).

Residues His-42–Met-131 enclose the ACB domain. An acyl-CoA-binding positions include Ile-53–Phe-62, Tyr-73–Lys-77, Lys-99, and Tyr-118. A disordered region spans residues Thr-182–Ala-227. 4 positions are modified to phosphoserine: Ser-194, Ser-195, Ser-197, and Ser-201. The segment covering Glu-208 to Ala-227 has biased composition (basic and acidic residues). Residues Ser-244 and Ser-314 each carry the phosphoserine modification. The disordered stretch occupies residues Gly-339–Arg-443. Residues Gly-374–Glu-383 show a composition bias toward basic and acidic residues. At Ser-429 the chain carries Phosphoserine. Over residues Asp-432–Ser-442 the composition is skewed to basic and acidic residues. Positions Glu-448–Gln-478 form a coiled coil. Lys-470 carries the N6-acetyllysine modification. Residues Ser-503–Tyr-525 traverse the membrane as a helical segment.

This sequence belongs to the ATG37 family. In terms of tissue distribution, highly expressed in brain and liver. Lower levels of expression in spleen and heart.

Its subcellular location is the peroxisome membrane. Its function is as follows. Acyl-CoA binding protein which acts as the peroxisome receptor for pexophagy but is dispensable for aggrephagy and nonselective autophagy. Binds medium- and long-chain acyl-CoA esters. In Bos taurus (Bovine), this protein is Acyl-CoA-binding domain-containing protein 5 (ACBD5).